Here is a 244-residue protein sequence, read N- to C-terminus: 3-deoxy-manno-octulosonate cytidylyltransferase (244 aa).

This sequence belongs to the KdsB family.

Its subcellular location is the cytoplasm. It carries out the reaction 3-deoxy-alpha-D-manno-oct-2-ulosonate + CTP = CMP-3-deoxy-beta-D-manno-octulosonate + diphosphate. It functions in the pathway nucleotide-sugar biosynthesis; CMP-3-deoxy-D-manno-octulosonate biosynthesis; CMP-3-deoxy-D-manno-octulosonate from 3-deoxy-D-manno-octulosonate and CTP: step 1/1. The protein operates within bacterial outer membrane biogenesis; lipopolysaccharide biosynthesis. Functionally, activates KDO (a required 8-carbon sugar) for incorporation into bacterial lipopolysaccharide in Gram-negative bacteria. The chain is 3-deoxy-manno-octulosonate cytidylyltransferase from Anaeromyxobacter sp. (strain Fw109-5).